The following is a 274-amino-acid chain: Kit ligand (274 aa).

The first 25 residues, 1-25, serve as a signal peptide directing secretion; sequence MKKTQTWIITCIYLQLLLFNPLVHS. Q26 bears the Pyrrolidone carboxylic acid mark. The Extracellular portion of the chain corresponds to 26 to 215; that stretch reads QGICRNRVTD…SNSIEDSSLQ (190 aa). 2 cysteine pairs are disulfide-bonded: C29–C114 and C68–C164. 4 N-linked (GlcNAc...) asparagine glycosylation sites follow: N90, N97, N145, and N196. A helical transmembrane segment spans residues 216–238; the sequence is WAAVALPAFFSLVIGFAFGALYW. At 239 to 274 the chain is on the cytoplasmic side; it reads KKKQPNLTRTVENRQINEEDNEISMLQEKEREFQEV.

Belongs to the SCF family. As to quaternary structure, homodimer, non-covalently linked. A soluble form is produced by proteolytic processing of the extracellular domain.

It is found in the cytoplasm. Its subcellular location is the cytoskeleton. It localises to the cell membrane. The protein resides in the cell projection. The protein localises to the lamellipodium. It is found in the filopodium. Its subcellular location is the secreted. In terms of biological role, stimulates the proliferation of mast cells. Able to augment the proliferation of both myeloid and lymphoid hematopoietic progenitors in bone marrow culture. Also mediates cell-cell adhesion. Acts synergistically with other cytokines, probably interleukins. This chain is Kit ligand (KITLG), found in Capra hircus (Goat).